Consider the following 101-residue polypeptide: Large ribosomal subunit protein uL23 (101 aa).

This sequence belongs to the universal ribosomal protein uL23 family. Part of the 50S ribosomal subunit. Contacts protein L29, and trigger factor when it is bound to the ribosome.

One of the early assembly proteins it binds 23S rRNA. One of the proteins that surrounds the polypeptide exit tunnel on the outside of the ribosome. Forms the main docking site for trigger factor binding to the ribosome. The chain is Large ribosomal subunit protein uL23 from Tolumonas auensis (strain DSM 9187 / NBRC 110442 / TA 4).